The sequence spans 310 residues: Melanocyte-stimulating hormone receptor (310 aa).

Residues 1-37 (MPMQGAQRKLLGSLNSTPTATSNLGLAANRTGAPCLE) are Extracellular-facing. N-linked (GlcNAc...) asparagine glycosylation occurs at N29. The helical transmembrane segment at 38–63 (LPIPDGLFLSLGLVSLVENVLVVAAI) threads the bilayer. The Cytoplasmic segment spans residues 64–72 (AKNRNLHSS). Residues 73–93 (MYCFICCLALSDLLVSGSNML) form a helical membrane-spanning segment. At 94-110 (EAGVLATRASVVQQLHN) the chain is on the extracellular side. A helical transmembrane segment spans residues 111–132 (TIDVLTCSSMLCSLCFLGAIAV). The Cytoplasmic segment spans residues 133–155 (DRYISIFYALRYHSIMTLPRAQR). The chain crosses the membrane as a helical span at residues 156 to 175 (AVAAIWVASVLSSTLFITYY). Topologically, residues 176 to 183 (DHAAVLLC) are extracellular. The helical transmembrane segment at 184–203 (LVVFFLAMLVLMAVLYVHML) threads the bilayer. Residues 204-232 (AWACQHAQGIIRLHKRQPPAHKGFGLRGA) are Cytoplasmic-facing. The chain crosses the membrane as a helical span at residues 233–258 (ATLTILLGIFFLCWGPFFLRLTLVVF). Residues 259–271 (CPQHLTCNCIFKN) lie on the Extracellular side of the membrane. A helical transmembrane segment spans residues 272–292 (FKVFLTLIICNTIIDPLIYAF). Over 293 to 310 (RSQELRRTLKEVLGRGRW) the chain is Cytoplasmic.

This sequence belongs to the G-protein coupled receptor 1 family. Interacts with MGRN1, but does not undergo MGRN1-mediated ubiquitination; this interaction competes with GNAS-binding and thus inhibits agonist-induced cAMP production. Interacts with OPN3; the interaction results in a decrease in MC1R-mediated cAMP signaling and ultimately a decrease in melanin production in melanocytes.

Its subcellular location is the cell membrane. Its function is as follows. Receptor for MSH (alpha, beta and gamma) and ACTH. The activity of this receptor is mediated by G proteins which activate adenylate cyclase. Mediates melanogenesis, the production of eumelanin (black/brown) and phaeomelanin (red/yellow), via regulation of cAMP signaling in melanocytes. The sequence is that of Melanocyte-stimulating hormone receptor (MC1R) from Leontopithecus chrysomelas (Golden-headed lion tamarin).